Here is a 65-residue protein sequence, read N- to C-terminus: Small ribosomal subunit protein bS21 (65 aa).

The span at 43-52 (EKKRVKEALA) shows a compositional bias: basic and acidic residues. The segment at 43–65 (EKKRVKEALARKRSRKKARKEQD) is disordered. A compositionally biased stretch (basic residues) spans 53–65 (RKRSRKKARKEQD).

This sequence belongs to the bacterial ribosomal protein bS21 family.

The sequence is that of Small ribosomal subunit protein bS21 from Koribacter versatilis (strain Ellin345).